A 156-amino-acid chain; its full sequence is MNFGATFWGPMISFALFVWFTMKFVWPPIQQALADRQKQIADGLAAGERGKEELDKAQAEVEAMLRDAREQASQIINQANKRQAEMIEEARAEARSEADRILASAREEIDQEIQRAREDLRKQVSTIAVQASSQILKREVDAKAHKDLIDELATQI.

A helical membrane pass occupies residues 4–26 (GATFWGPMISFALFVWFTMKFVW).

The protein belongs to the ATPase B chain family. In terms of assembly, F-type ATPases have 2 components, F(1) - the catalytic core - and F(0) - the membrane proton channel. F(1) has five subunits: alpha(3), beta(3), gamma(1), delta(1), epsilon(1). F(0) has three main subunits: a(1), b(2) and c(10-14). The alpha and beta chains form an alternating ring which encloses part of the gamma chain. F(1) is attached to F(0) by a central stalk formed by the gamma and epsilon chains, while a peripheral stalk is formed by the delta and b chains.

It is found in the cell inner membrane. In terms of biological role, f(1)F(0) ATP synthase produces ATP from ADP in the presence of a proton or sodium gradient. F-type ATPases consist of two structural domains, F(1) containing the extramembraneous catalytic core and F(0) containing the membrane proton channel, linked together by a central stalk and a peripheral stalk. During catalysis, ATP synthesis in the catalytic domain of F(1) is coupled via a rotary mechanism of the central stalk subunits to proton translocation. Its function is as follows. Component of the F(0) channel, it forms part of the peripheral stalk, linking F(1) to F(0). The polypeptide is ATP synthase subunit b (Halorhodospira halophila (strain DSM 244 / SL1) (Ectothiorhodospira halophila (strain DSM 244 / SL1))).